Consider the following 120-residue polypeptide: Large ribosomal subunit protein uL18 (120 aa).

This sequence belongs to the universal ribosomal protein uL18 family. As to quaternary structure, part of the 50S ribosomal subunit; part of the 5S rRNA/L5/L18/L25 subcomplex. Contacts the 5S and 23S rRNAs.

This is one of the proteins that bind and probably mediate the attachment of the 5S RNA into the large ribosomal subunit, where it forms part of the central protuberance. The chain is Large ribosomal subunit protein uL18 from Geobacillus thermodenitrificans (strain NG80-2).